The sequence spans 509 residues: Photosystem II CP47 reaction center protein (509 aa).

6 helical membrane passes run 21-36 (AVHL…WAGS), 101-115 (IILS…IWHW), 140-156 (GIHL…FGAF), 203-218 (IAAG…FHLT), 237-252 (VLSS…AFVT), and 457-472 (NFAL…HGGR).

It belongs to the PsbB/PsbC family. PsbB subfamily. In terms of assembly, PSII is composed of 1 copy each of membrane proteins PsbA, PsbB, PsbC, PsbD, PsbE, PsbF, PsbH, PsbI, PsbJ, PsbK, PsbL, PsbM, PsbT, PsbX, PsbY, PsbZ, Psb30/Ycf12, at least 3 peripheral proteins of the oxygen-evolving complex and a large number of cofactors. It forms dimeric complexes. Binds multiple chlorophylls. PSII binds additional chlorophylls, carotenoids and specific lipids. serves as cofactor.

It is found in the plastid. The protein localises to the chloroplast thylakoid membrane. In terms of biological role, one of the components of the core complex of photosystem II (PSII). It binds chlorophyll and helps catalyze the primary light-induced photochemical processes of PSII. PSII is a light-driven water:plastoquinone oxidoreductase, using light energy to abstract electrons from H(2)O, generating O(2) and a proton gradient subsequently used for ATP formation. The sequence is that of Photosystem II CP47 reaction center protein from Trieres chinensis (Marine centric diatom).